Reading from the N-terminus, the 165-residue chain is Nucleotide-binding protein Ccur92_01650 (165 aa).

Belongs to the YajQ family.

Nucleotide-binding protein. The sequence is that of Nucleotide-binding protein Ccur92_01650 from Campylobacter curvus (strain 525.92).